Here is a 1256-residue protein sequence, read N- to C-terminus: Putative protein DDB_G0292252 (1256 aa).

Disordered regions lie at residues 1 to 53, 145 to 243, 898 to 951, and 1069 to 1136; these read MSDD…NNNN, LLNG…SISR, EQQQ…PVET, and SHPT…ATIS. Residues 147–214 show a composition bias toward low complexity; the sequence is NGNNSNNNSN…NGNNINTSNG (68 aa). Positions 222–243 are enriched in polar residues; it reads QTESTEQDFTSTSQNSTPSISR. 2 stretches are compositionally biased toward low complexity: residues 898-916 and 925-942; these read EQQQQQQQQQSNLNNSNNE and TTAATTTTTTTTTTTTTT. Polar residues predominate over residues 1069-1079; sequence SHPTIQSTSSP. Low complexity predominate over residues 1080-1136; the sequence is STSSSNNNNSTTTATNNNGNNGNNNNGNGNNNNNNNNNNNNNNNNNNNNNNGPATIS.

This Dictyostelium discoideum (Social amoeba) protein is Putative protein DDB_G0292252.